The chain runs to 393 residues: MSENFKQMLAESGLPTEETQIRQEFERLTAEEGLITNTSRMSPFWRLITAIAVKPVKWLTDHLIAEILPNLFVKTAKDSWLQIQAWAVGLDFKAATKAEGVVHFTKESDVTDLTIKAGTVIQTERINDVIFRLIVTQETIIPKGVLRAPVPVIAEQAGANFNLAAGYYRILPESIAGVSAVENLEDWLTSPGADRETNDELRERYRTQFSSVGQHHIDSVYKGMIAKVAALSVDRIYFKHDAPRGPGTANAYLLLDTGVTSQPFIDKVNRYVRDEGFHGHGDDLICYAMPETKHNLTCAIYFQPSIFVGDVRKQEIVQQVENMIRCAFRENNNYGVTRTYPFTVLVGRNWARKFTTTSAKLHLSYGGKSTFKASYLFHAFSNYPSQSKSKGQK.

The protein belongs to the P2likevirus gpJ protein family.

Its subcellular location is the virion. Its function is as follows. Putative baseplate protein. The polypeptide is Putative baseplate protein gp29 (Haemophilus phage HP1 (strain HP1c1) (Bacteriophage HP1)).